Here is a 362-residue protein sequence, read N- to C-terminus: EARP-interacting protein 1 (362 aa).

4 WD repeats span residues 61–108, 206–246, 250–290, and 319–359; these read HPAG…RTLE, AHIH…SALT, PHAH…SEQQ, and EHED…KYAL.

It belongs to the WD repeat EIPR1 family. In terms of tissue distribution, expressed in the hypodermis and the pharynx.

It localises to the cytoplasm. Plays a role in the trafficking of cargo to dense-core vesicles, probably through association with the endosome-associated recycling protein (EARP) complex. Important for neuronal function. The chain is EARP-interacting protein 1 from Caenorhabditis elegans.